We begin with the raw amino-acid sequence, 382 residues long: Carbamoyl phosphate synthase small chain (382 aa).

Positions 1–189 (MIKSALLVLE…GLPEAKKEDE (189 aa)) are CPSase. Positions 47, 241, and 243 each coordinate L-glutamine. Positions 193–380 (HVVAYDFGAK…IALIEQYRKT (188 aa)) constitute a Glutamine amidotransferase type-1 domain. Cys269 functions as the Nucleophile in the catalytic mechanism. Positions 270, 273, 311, 313, and 314 each coordinate L-glutamine. Residues His353 and Glu355 contribute to the active site.

The protein belongs to the CarA family. Composed of two chains; the small (or glutamine) chain promotes the hydrolysis of glutamine to ammonia, which is used by the large (or ammonia) chain to synthesize carbamoyl phosphate. Tetramer of heterodimers (alpha,beta)4.

It carries out the reaction hydrogencarbonate + L-glutamine + 2 ATP + H2O = carbamoyl phosphate + L-glutamate + 2 ADP + phosphate + 2 H(+). The catalysed reaction is L-glutamine + H2O = L-glutamate + NH4(+). The protein operates within amino-acid biosynthesis; L-arginine biosynthesis; carbamoyl phosphate from bicarbonate: step 1/1. Its pathway is pyrimidine metabolism; UMP biosynthesis via de novo pathway; (S)-dihydroorotate from bicarbonate: step 1/3. Small subunit of the glutamine-dependent carbamoyl phosphate synthetase (CPSase). CPSase catalyzes the formation of carbamoyl phosphate from the ammonia moiety of glutamine, carbonate, and phosphate donated by ATP, constituting the first step of 2 biosynthetic pathways, one leading to arginine and/or urea and the other to pyrimidine nucleotides. The small subunit (glutamine amidotransferase) binds and cleaves glutamine to supply the large subunit with the substrate ammonia. This is Carbamoyl phosphate synthase small chain from Escherichia coli O6:H1 (strain CFT073 / ATCC 700928 / UPEC).